The sequence spans 350 residues: Ion-translocating oxidoreductase complex subunit D (350 aa).

3 helical membrane passes run 20-39 (IMML…WYFF), 89-109 (IPPL…VIIA), and 123-143 (PAMI…TNWL). At threonine 187 the chain carries FMN phosphoryl threonine. 5 helical membrane-spanning segments follow: residues 215–235 (LAGL…LFLL), 244–264 (IPVS…LIAP), 267–287 (FLSP…FFIL), 301–321 (LVFG…GGYP), and 322–342 (DGVA…DYYT).

It belongs to the NqrB/RnfD family. In terms of assembly, the complex is composed of six subunits: RnfA, RnfB, RnfC, RnfD, RnfE and RnfG. The cofactor is FMN.

Its subcellular location is the cell inner membrane. In terms of biological role, part of a membrane-bound complex that couples electron transfer with translocation of ions across the membrane. The polypeptide is Ion-translocating oxidoreductase complex subunit D (Cronobacter sakazakii (strain ATCC BAA-894) (Enterobacter sakazakii)).